A 1053-amino-acid chain; its full sequence is Carbamoyl phosphate synthase large chain (1053 aa).

Positions 1 to 397 (MPKRTDIKKV…SFMKAKRSID (397 aa)) are carboxyphosphate synthetic domain. Arg127, Arg167, Gly173, Gly174, Glu206, Val208, Glu213, Gly239, Ile240, His241, Gln282, and Glu294 together coordinate ATP. The region spanning 131-323 (RDLMNEIGEP…IARVAAKIAI (193 aa)) is the ATP-grasp 1 domain. Mg(2+) contacts are provided by Gln282, Glu294, and Asn296. 3 residues coordinate Mn(2+): Gln282, Glu294, and Asn296. An oligomerization domain region spans residues 398–530 (TDVRTHTSPS…YSTREGTSEI (133 aa)). The interval 531–919 (VRDKKQKILI…YKACISADNE (389 aa)) is carbamoyl phosphate synthetic domain. An ATP-grasp 2 domain is found at 661-852 (SVLLTTLQIP…IAKIAAKVMI (192 aa)). Residues Arg697, Ser736, Leu738, Glu743, Gly768, Ile769, His770, Ser771, Gln811, and Glu823 each contribute to the ATP site. 3 residues coordinate Mg(2+): Gln811, Glu823, and Asn825. Mn(2+) contacts are provided by Gln811, Glu823, and Asn825. Residues 918-1053 (NELPLKGNVF…TLEPLSHYLR (136 aa)) form the MGS-like domain. An allosteric domain region spans residues 920-1053 (LPLKGNVFVS…TLEPLSHYLR (134 aa)).

It belongs to the CarB family. In terms of assembly, composed of two chains; the small (or glutamine) chain promotes the hydrolysis of glutamine to ammonia, which is used by the large (or ammonia) chain to synthesize carbamoyl phosphate. Tetramer of heterodimers (alpha,beta)4. Mg(2+) serves as cofactor. Mn(2+) is required as a cofactor.

It catalyses the reaction hydrogencarbonate + L-glutamine + 2 ATP + H2O = carbamoyl phosphate + L-glutamate + 2 ADP + phosphate + 2 H(+). It carries out the reaction hydrogencarbonate + NH4(+) + 2 ATP = carbamoyl phosphate + 2 ADP + phosphate + 2 H(+). It functions in the pathway amino-acid biosynthesis; L-arginine biosynthesis; carbamoyl phosphate from bicarbonate: step 1/1. The protein operates within pyrimidine metabolism; UMP biosynthesis via de novo pathway; (S)-dihydroorotate from bicarbonate: step 1/3. Large subunit of the glutamine-dependent carbamoyl phosphate synthetase (CPSase). CPSase catalyzes the formation of carbamoyl phosphate from the ammonia moiety of glutamine, carbonate, and phosphate donated by ATP, constituting the first step of 2 biosynthetic pathways, one leading to arginine and/or urea and the other to pyrimidine nucleotides. The large subunit (synthetase) binds the substrates ammonia (free or transferred from glutamine from the small subunit), hydrogencarbonate and ATP and carries out an ATP-coupled ligase reaction, activating hydrogencarbonate by forming carboxy phosphate which reacts with ammonia to form carbamoyl phosphate. This is Carbamoyl phosphate synthase large chain from Methanoregula boonei (strain DSM 21154 / JCM 14090 / 6A8).